Consider the following 811-residue polypeptide: Elongation factor G, mitochondrial (811 aa).

A mitochondrion-targeting transit peptide spans 1 to 64 (MSAIARAAAR…FQQSFQRRWA (64 aa)). The 299-residue stretch at 96 to 394 (RRQRNVGISA…GVCAYLPNPS (299 aa)) folds into the tr-type G domain. Residues 105–112 (AHIDSGKT), 192–196 (DTPGH), and 246–249 (NKMD) each bind GTP.

The protein belongs to the TRAFAC class translation factor GTPase superfamily. Classic translation factor GTPase family. EF-G/EF-2 subfamily.

It localises to the mitochondrion. It participates in protein biosynthesis; polypeptide chain elongation. In terms of biological role, mitochondrial GTPase that catalyzes the GTP-dependent ribosomal translocation step during translation elongation. During this step, the ribosome changes from the pre-translocational (PRE) to the post-translocational (POST) state as the newly formed A-site-bound peptidyl-tRNA and P-site-bound deacylated tRNA move to the P and E sites, respectively. Catalyzes the coordinated movement of the two tRNA molecules, the mRNA and conformational changes in the ribosome. The protein is Elongation factor G, mitochondrial of Cryptococcus neoformans var. neoformans serotype D (strain B-3501A) (Filobasidiella neoformans).